Reading from the N-terminus, the 273-residue chain is 4-hydroxy-tetrahydrodipicolinate reductase (273 aa).

NAD(+)-binding positions include glycine 12–methionine 17 and glutamate 38. Arginine 39 lines the NADP(+) pocket. NAD(+)-binding positions include glycine 102–threonine 104 and alanine 126–phenylalanine 129. Histidine 159 functions as the Proton donor/acceptor in the catalytic mechanism. Histidine 160 is a (S)-2,3,4,5-tetrahydrodipicolinate binding site. The active-site Proton donor is the lysine 163. Glycine 169–threonine 170 is a (S)-2,3,4,5-tetrahydrodipicolinate binding site.

The protein belongs to the DapB family. In terms of assembly, homotetramer.

It is found in the cytoplasm. The catalysed reaction is (S)-2,3,4,5-tetrahydrodipicolinate + NAD(+) + H2O = (2S,4S)-4-hydroxy-2,3,4,5-tetrahydrodipicolinate + NADH + H(+). It catalyses the reaction (S)-2,3,4,5-tetrahydrodipicolinate + NADP(+) + H2O = (2S,4S)-4-hydroxy-2,3,4,5-tetrahydrodipicolinate + NADPH + H(+). It functions in the pathway amino-acid biosynthesis; L-lysine biosynthesis via DAP pathway; (S)-tetrahydrodipicolinate from L-aspartate: step 4/4. Its function is as follows. Catalyzes the conversion of 4-hydroxy-tetrahydrodipicolinate (HTPA) to tetrahydrodipicolinate. The polypeptide is 4-hydroxy-tetrahydrodipicolinate reductase (Pectobacterium carotovorum subsp. carotovorum (strain PC1)).